The chain runs to 128 residues: uncharacterized protein (128 aa).

Cysteines 10 and 13 form a disulfide.

It belongs to the ArsC family.

This is an uncharacterized protein from Ureaplasma parvum serovar 3 (strain ATCC 700970).